The chain runs to 205 residues: Meiotic nuclear division protein 1 homolog (205 aa).

Residue serine 2 is modified to N-acetylserine. The stretch at 83–173 (KRKLEVLDSQ…EAANRWTDNI (91 aa)) forms a coiled coil.

Belongs to the MND1 family. In terms of assembly, heterodimer with PSMC3IP/HOP2. MND1-PSMC3IP interacts with DMC1 and RAD51 and binds preferentially to dsDNA.

The protein localises to the nucleus. Functionally, required for proper homologous chromosome pairing and efficient cross-over and intragenic recombination during meiosis. Stimulates both DMC1- and RAD51-mediated homologous strand assimilation, which is required for the resolution of meiotic double-strand breaks. In Bos taurus (Bovine), this protein is Meiotic nuclear division protein 1 homolog.